The primary structure comprises 247 residues: Carbonic anhydrase (247 aa).

Residues 1–34 form the signal peptide; it reads MMFNKQIFTILILSLSLALAGSGCISEGAEDNVA. Residue 93–95 coordinates substrate; the sequence is RSD. The Proton donor/acceptor role is filled by Glu-96. 109–110 is a binding site for substrate; that stretch reads QD. A Zn(2+)-binding site is contributed by His-115. Glu-118 is an active-site residue. Zn(2+) contacts are provided by His-151 and His-156. Asn-236 is a binding site for substrate.

Belongs to the gamma-class carbonic anhydrase family. In terms of assembly, homotrimer. The cofactor is Zn(2+).

Its subcellular location is the secreted. It carries out the reaction hydrogencarbonate + H(+) = CO2 + H2O. Its function is as follows. Reversible hydration of carbon dioxide. Important for growth on acetate. As a probably extracellular enzyme, it may support a H(+)/CH(3)COO(-) symport mechanism and/or conversion of CO(2) to HCO(3)(-), removing excess CO(2) produced by growth on acetate. This Methanosarcina thermophila (strain ATCC 43570 / DSM 1825 / OCM 12 / VKM B-1830 / TM-1) protein is Carbonic anhydrase.